The sequence spans 323 residues: MDSKYQCVKLNDSHFMPVLGFGTYAPPEVPKSKALEATKLAIEAGFRHIDSAHLYNNEEQVGLAIRSKIADGSVKREDIFYTSKLWCNSHRPELVRPALERSLKNLQLDYVDLYLVHFPVSVKPGEEVIPKDENGKILFDTVDLCATWEAMEKCKDAGLAKSIGVSNFNRRQLEMILNKPGLKYKPVCNQVECHPYFNQRKLLDFCKSKDIVLVAYSALGSHREEKWVDPNSPVLLEDPVLCALAKKHKQTPALIALRYQLQRGVVVLAKSYNEQRIRQNMQVFDFQLTSEDMKTIDGLNRNMRYLTLDIFAGPPNYPFSDEY.

NADP(+) is bound by residues Gly20–Tyr24 and Asp50. Position 24 (Tyr24) interacts with substrate. Tyr55 functions as the Proton donor in the catalytic mechanism. His117 is a binding site for substrate. NADP(+) contacts are provided by residues Ser166 to Asn167, Gln190, and Tyr216 to His222. 2 residues coordinate substrate: His222 and Trp227. Lys270–Asn280 serves as a coordination point for NADP(+).

It belongs to the aldo/keto reductase family. Monomer.

The protein localises to the cytoplasm. The protein resides in the cytosol. The enzyme catalyses a 3alpha-hydroxysteroid + NADP(+) = a 3-oxosteroid + NADPH + H(+). It catalyses the reaction a 3alpha-hydroxysteroid + NAD(+) = a 3-oxosteroid + NADH + H(+). The catalysed reaction is (17R,20S)-17,20-dihydroxypregn-4-en-3-one + NADP(+) = 17alpha-hydroxyprogesterone + NADPH + H(+). It carries out the reaction (17R,20S)-17,20-dihydroxypregn-4-en-3-one + NAD(+) = 17alpha-hydroxyprogesterone + NADH + H(+). The enzyme catalyses (20S)-hydroxypregn-4-en-3-one + NADP(+) = progesterone + NADPH + H(+). It catalyses the reaction (20S)-hydroxypregn-4-en-3-one + NAD(+) = progesterone + NADH + H(+). The catalysed reaction is (1R,2R)-1,2-dihydrobenzene-1,2-diol + NADP(+) = catechol + NADPH + H(+). It carries out the reaction (S)-indan-1-ol + NAD(+) = indan-1-one + NADH + H(+). The enzyme catalyses (S)-indan-1-ol + NADP(+) = indan-1-one + NADPH + H(+). It catalyses the reaction 5alpha-androstane-3alpha,17beta-diol + NADP(+) = 17beta-hydroxy-5alpha-androstan-3-one + NADPH + H(+). The catalysed reaction is 5alpha-androstane-3beta,17beta-diol + NADP(+) = 17beta-hydroxy-5alpha-androstan-3-one + NADPH + H(+). It carries out the reaction 5alpha-androstane-3alpha,17beta-diol + NAD(+) = 17beta-hydroxy-5alpha-androstan-3-one + NADH + H(+). The enzyme catalyses 17beta-hydroxy-5alpha-androstan-3-one + NADP(+) = 5alpha-androstan-3,17-dione + NADPH + H(+). It catalyses the reaction androsterone + NADP(+) = 5alpha-androstan-3,17-dione + NADPH + H(+). The catalysed reaction is androsterone + NADPH + H(+) = 5alpha-androstane-3alpha,17beta-diol + NADP(+). It carries out the reaction 5alpha-androstane-3alpha,17beta-diol + NAD(+) = androsterone + NADH + H(+). The enzyme catalyses 17beta-estradiol + NADP(+) = estrone + NADPH + H(+). It catalyses the reaction 17beta-estradiol + NAD(+) = estrone + NADH + H(+). The catalysed reaction is testosterone + NADP(+) = androst-4-ene-3,17-dione + NADPH + H(+). It carries out the reaction 20alpha-hydroxy-5beta-pregnan-3-one + NADP(+) = 5beta-pregnan-3,20-dione + NADPH + H(+). The enzyme catalyses 3beta-hydroxy-5beta-pregnane-20-one + NADP(+) = 5beta-pregnan-3,20-dione + NADPH + H(+). It catalyses the reaction 3beta-hydroxy-5beta-pregnane-20-one + NADPH + H(+) = 3beta,20alpha-dihydroxy-5beta-pregnane + NADP(+). The catalysed reaction is (3beta,5alpha,17beta)-3-hydroxyandrostan-17-yl sulfate + NADP(+) = 5alpha-dihydrotestosterone sulfate + NADPH + H(+). It functions in the pathway steroid metabolism. Functionally, cytosolic aldo-keto reductase that catalyzes the NADH and NADPH-dependent reduction of ketosteroids to hydroxysteroids. Most probably acts as a reductase in vivo since the oxidase activity measured in vitro is inhibited by physiological concentrations of NADPH. Displays a broad positional specificity acting on positions 3, 17 and 20 of steroids and regulates the metabolism of hormones like estrogens and androgens. May also reduce conjugated steroids such as 5alpha-dihydrotestosterone sulfate. Displays affinity for bile acids. The protein is Aldo-keto reductase family 1 member C1 (AKR1C1) of Pongo abelii (Sumatran orangutan).